The following is a 94-amino-acid chain: Small ribosomal subunit protein bS6 (94 aa).

The protein belongs to the bacterial ribosomal protein bS6 family.

Functionally, binds together with bS18 to 16S ribosomal RNA. The protein is Small ribosomal subunit protein bS6 of Akkermansia muciniphila (strain ATCC BAA-835 / DSM 22959 / JCM 33894 / BCRC 81048 / CCUG 64013 / CIP 107961 / Muc).